The chain runs to 709 residues: ATP-dependent zinc metalloprotease YME1 homolog (709 aa).

The disordered stretch occupies residues 152–182 (FTSDTSSTVSSTPSLNHSLQNSMPPSTPTPP). Residues 153–165 (TSDTSSTVSSTPS) show a composition bias toward low complexity. The chain crosses the membrane as a helical span at residues 217-239 (IFKFIAGLSVASYFVLLGMSIFA). 307-314 (GPPGTGKT) lines the ATP pocket. Position 530 (His530) interacts with Zn(2+). Residue Glu531 is part of the active site. Residues His534 and Asp608 each coordinate Zn(2+).

The protein in the N-terminal section; belongs to the AAA ATPase family. This sequence in the C-terminal section; belongs to the peptidase M41 family. Zn(2+) serves as cofactor.

The protein resides in the mitochondrion membrane. Putative ATP-dependent protease. The protein is ATP-dependent zinc metalloprotease YME1 homolog of Schizosaccharomyces pombe (strain 972 / ATCC 24843) (Fission yeast).